Here is a 723-residue protein sequence, read N- to C-terminus: Fatty acid oxidation complex subunit alpha (723 aa).

The segment at 1-189 is enoyl-CoA hydratase/isomerase; that stretch reads MIYQAKTLQV…KVGLLDAIVD (189 aa). Position 296 (D296) interacts with substrate. The interval 311–723 is 3-hydroxyacyl-CoA dehydrogenase; it reads SQDTQHAAVL…FYSAQQVSAL (413 aa). NAD(+)-binding positions include M325, D344, 401–403, K408, and S430; that span reads VVE. H451 serves as the catalytic For 3-hydroxyacyl-CoA dehydrogenase activity. N454 lines the NAD(+) pocket. The substrate site is built by N501 and Y661.

This sequence in the N-terminal section; belongs to the enoyl-CoA hydratase/isomerase family. In the C-terminal section; belongs to the 3-hydroxyacyl-CoA dehydrogenase family. As to quaternary structure, heterotetramer of two alpha chains (FadB) and two beta chains (FadA).

The enzyme catalyses a (3S)-3-hydroxyacyl-CoA + NAD(+) = a 3-oxoacyl-CoA + NADH + H(+). It catalyses the reaction a (3S)-3-hydroxyacyl-CoA = a (2E)-enoyl-CoA + H2O. It carries out the reaction a 4-saturated-(3S)-3-hydroxyacyl-CoA = a (3E)-enoyl-CoA + H2O. The catalysed reaction is (3S)-3-hydroxybutanoyl-CoA = (3R)-3-hydroxybutanoyl-CoA. The enzyme catalyses a (3Z)-enoyl-CoA = a 4-saturated (2E)-enoyl-CoA. It catalyses the reaction a (3E)-enoyl-CoA = a 4-saturated (2E)-enoyl-CoA. Its pathway is lipid metabolism; fatty acid beta-oxidation. In terms of biological role, involved in the aerobic and anaerobic degradation of long-chain fatty acids via beta-oxidation cycle. Catalyzes the formation of 3-oxoacyl-CoA from enoyl-CoA via L-3-hydroxyacyl-CoA. It can also use D-3-hydroxyacyl-CoA and cis-3-enoyl-CoA as substrate. The protein is Fatty acid oxidation complex subunit alpha of Vibrio cholerae serotype O1 (strain ATCC 39315 / El Tor Inaba N16961).